Consider the following 274-residue polypeptide: tRNA-cytidine(32) 2-sulfurtransferase (274 aa).

A PP-loop motif motif is present at residues 40 to 45 (SGGKDS). [4Fe-4S] cluster-binding residues include C115, C118, and C206.

This sequence belongs to the TtcA family. Homodimer. Requires Mg(2+) as cofactor. [4Fe-4S] cluster serves as cofactor.

The protein localises to the cytoplasm. The catalysed reaction is cytidine(32) in tRNA + S-sulfanyl-L-cysteinyl-[cysteine desulfurase] + AH2 + ATP = 2-thiocytidine(32) in tRNA + L-cysteinyl-[cysteine desulfurase] + A + AMP + diphosphate + H(+). It participates in tRNA modification. Its function is as follows. Catalyzes the ATP-dependent 2-thiolation of cytidine in position 32 of tRNA, to form 2-thiocytidine (s(2)C32). The sulfur atoms are provided by the cysteine/cysteine desulfurase (IscS) system. This is tRNA-cytidine(32) 2-sulfurtransferase from Stutzerimonas stutzeri (strain A1501) (Pseudomonas stutzeri).